Here is a 317-residue protein sequence, read N- to C-terminus: Apolipoprotein E (317 aa).

The signal sequence occupies residues 1 to 18 (MRVLWVALVVTLLAGCRT). A run of 8 repeats spans residues 79–100 (ELIE…AQLG), 101–122 (PVTQ…ARVG), 123–144 (ADME…NMLG), 145–166 (QTTE…KRLV), 167–188 (RDTE…EGAE), 189–210 (RSVS…LRAA), 211–232 (TLST…QKLR), and 233–254 (GRLE…DELE). Residues 79–254 (ELIEESMKEV…RLDEMRDELE (176 aa)) are 8 X 22 AA approximate tandem repeats. Met-142 is subject to Methionine sulfoxide. The LDL and other lipoprotein receptors binding stretch occupies residues 157 to 167 (HLRNVRKRLVR). 161 to 164 (VRKR) provides a ligand contact to heparin. The lipid-binding and lipoprotein association stretch occupies residues 209 to 289 (AATLSTRAGQ…GWFEPLVEDM (81 aa)). A heparin-binding site is contributed by 228 to 235 (GQKLRGRL). Residues 265–317 (SQLRLQAEAFQARLKGWFEPLVEDMRRQWAGLVERMQSAVSISSSTSAPSDNQ) are homooligomerization. A specificity for association with VLDL region spans residues 277 to 289 (RLKGWFEPLVEDM).

It belongs to the apolipoprotein A1/A4/E family. In terms of assembly, homotetramer. May interact with ABCA1; functionally associated with ABCA1 in the biogenesis of HDLs. May interact with APP/A4 amyloid-beta peptide; the interaction is extremely stable in vitro but its physiological significance is unclear. May interact with MAPT. May interact with MAP2. In the cerebrospinal fluid, interacts with secreted SORL1. Interacts with PMEL; this allows the loading of PMEL luminal fragment on ILVs to induce fibril nucleation. Post-translationally, APOE exists as multiple glycosylated and sialylated glycoforms within cells and in plasma. The extent of glycosylation and sialylation are tissue and context specific. In terms of processing, glycated in plasma VLDL. Phosphorylated by FAM20C in the extracellular medium.

It is found in the secreted. The protein resides in the extracellular space. The protein localises to the extracellular matrix. It localises to the extracellular vesicle. Its subcellular location is the endosome. It is found in the multivesicular body. In terms of biological role, APOE is an apolipoprotein, a protein associating with lipid particles, that mainly functions in lipoprotein-mediated lipid transport between organs via the plasma and interstitial fluids. APOE is a core component of plasma lipoproteins and is involved in their production, conversion and clearance. Apolipoproteins are amphipathic molecules that interact both with lipids of the lipoprotein particle core and the aqueous environment of the plasma. As such, APOE associates with chylomicrons, chylomicron remnants, very low density lipoproteins (VLDL) and intermediate density lipoproteins (IDL) but shows a preferential binding to high-density lipoproteins (HDL). It also binds a wide range of cellular receptors including the LDL receptor/LDLR and the very low-density lipoprotein receptor/VLDLR that mediate the cellular uptake of the APOE-containing lipoprotein particles. Finally, APOE also has a heparin-binding activity and binds heparan-sulfate proteoglycans on the surface of cells, a property that supports the capture and the receptor-mediated uptake of APOE-containing lipoproteins by cells. The polypeptide is Apolipoprotein E (APOE) (Sus scrofa (Pig)).